Consider the following 220-residue polypeptide: Guanylate kinase (220 aa).

A Guanylate kinase-like domain is found at 15-194 (GLMLVISSPS…ALDAVQSIVK (180 aa)). Position 22 to 29 (22 to 29 (SPSGAGKS)) interacts with ATP.

The protein belongs to the guanylate kinase family.

It is found in the cytoplasm. The enzyme catalyses GMP + ATP = GDP + ADP. Essential for recycling GMP and indirectly, cGMP. The protein is Guanylate kinase of Rhizobium johnstonii (strain DSM 114642 / LMG 32736 / 3841) (Rhizobium leguminosarum bv. viciae).